We begin with the raw amino-acid sequence, 361 residues long: GDSL esterase/lipase At4g18970 (361 aa).

Residues 1–22 form the signal peptide; sequence MARVCVMMMAMAIAMAMNIAMG. Ser-35 serves as the catalytic Nucleophile. Active-site residues include Asp-325 and His-328.

This sequence belongs to the 'GDSL' lipolytic enzyme family.

The protein localises to the secreted. The chain is GDSL esterase/lipase At4g18970 from Arabidopsis thaliana (Mouse-ear cress).